The sequence spans 353 residues: UPF0283 membrane protein YcjF (353 aa).

Transmembrane regions (helical) follow at residues 70-90 (MVMG…VQWT), 100-120 (VALG…GSVV), and 213-233 (ESTL…FIAW).

Belongs to the UPF0283 family.

It is found in the cell inner membrane. This is UPF0283 membrane protein YcjF from Escherichia coli O127:H6 (strain E2348/69 / EPEC).